Here is a 449-residue protein sequence, read N- to C-terminus: Argininosuccinate synthase (449 aa).

Residues 17–25 (AFSGGLDTS) and Ala43 contribute to the ATP site. Tyr99 provides a ligand contact to L-citrulline. ATP is bound by residues Gly129 and Thr131. Positions 131, 135, and 136 each coordinate L-aspartate. Asn135 lines the L-citrulline pocket. Position 136 (Asp136) interacts with ATP. L-citrulline contacts are provided by Arg139 and Ser192. ATP is bound at residue Asp194. Residues Thr201, Glu203, and Glu280 each contribute to the L-citrulline site.

It belongs to the argininosuccinate synthase family. Type 2 subfamily. In terms of assembly, homotetramer.

It is found in the cytoplasm. The enzyme catalyses L-citrulline + L-aspartate + ATP = 2-(N(omega)-L-arginino)succinate + AMP + diphosphate + H(+). The protein operates within amino-acid biosynthesis; L-arginine biosynthesis; L-arginine from L-ornithine and carbamoyl phosphate: step 2/3. The sequence is that of Argininosuccinate synthase from Dickeya dadantii (strain 3937) (Erwinia chrysanthemi (strain 3937)).